A 242-amino-acid polypeptide reads, in one-letter code: Uridylate kinase (242 aa).

16-19 (KVSG) provides a ligand contact to ATP. G58 is a binding site for UMP. 2 residues coordinate ATP: G59 and R63. Residues D78 and 139–146 (TGNPFCTT) each bind UMP. The ATP site is built by T166, Q167, Y172, and D175.

It belongs to the UMP kinase family. As to quaternary structure, homohexamer.

The protein localises to the cytoplasm. It catalyses the reaction UMP + ATP = UDP + ADP. It functions in the pathway pyrimidine metabolism; CTP biosynthesis via de novo pathway; UDP from UMP (UMPK route): step 1/1. Its activity is regulated as follows. Inhibited by UTP. Its function is as follows. Catalyzes the reversible phosphorylation of UMP to UDP. The protein is Uridylate kinase of Rickettsia felis (strain ATCC VR-1525 / URRWXCal2) (Rickettsia azadi).